Consider the following 109-residue polypeptide: MTLKLIWDKFYVSIIFVITCLVLGIILMCTVIGSGSEYSEVDVNEGDSIWALADQYAAKSDMAKADFVSWVEKENNLTDGHVKAGDYVVIPVHETKLQRSDSTIQLANQ.

A LysM domain is found at serine 39 to isoleucine 90.

This sequence belongs to the YneA family.

Its subcellular location is the cytoplasm. Its function is as follows. Inhibits cell division during the SOS response. Affects a later stage of the cell division protein assembly, after the assembly of the Z ring, by probably suppressing recruitment of FtsL and/or DivIC to the division machinery. This is Cell division suppressor protein YneA from Listeria innocua serovar 6a (strain ATCC BAA-680 / CLIP 11262).